Here is a 340-residue protein sequence, read N- to C-terminus: Glyceraldehyde-3-phosphate dehydrogenase (340 aa).

Residues Ser-11 to Ile-12 and Gly-111 each bind NAD(+). Ser-140–Asn-142 serves as a coordination point for D-glyceraldehyde 3-phosphate. Residue Cys-141 is the Nucleophile of the active site. An NAD(+)-binding site is contributed by Arg-169. A D-glyceraldehyde 3-phosphate-binding site is contributed by His-195–Gly-196. Residue Gln-303 participates in NAD(+) binding.

It belongs to the glyceraldehyde-3-phosphate dehydrogenase family. Homotetramer.

It is found in the cytoplasm. It catalyses the reaction D-glyceraldehyde 3-phosphate + phosphate + NADP(+) = (2R)-3-phospho-glyceroyl phosphate + NADPH + H(+). The enzyme catalyses D-glyceraldehyde 3-phosphate + phosphate + NAD(+) = (2R)-3-phospho-glyceroyl phosphate + NADH + H(+). It functions in the pathway carbohydrate degradation; glycolysis; pyruvate from D-glyceraldehyde 3-phosphate: step 1/5. In Methanococcus vannielii (strain ATCC 35089 / DSM 1224 / JCM 13029 / OCM 148 / SB), this protein is Glyceraldehyde-3-phosphate dehydrogenase.